The sequence spans 506 residues: Gamma-aminobutyric acid receptor subunit epsilon (506 aa).

The N-terminal stretch at 1-22 is a signal peptide; that stretch reads MLSKVLPVLLGILLILQSRVEG. The disordered stretch occupies residues 23-66; that stretch reads PQTESKNEASSRDVVYGPQPQPLENQLLSEETKSTETETGSRVG. Topologically, residues 23–280 are extracellular; sequence PQTESKNEAS…FNVSRRFGYV (258 aa). N-linked (GlcNAc...) asparagine glycosylation occurs at Asn-134. Cys-195 and Cys-209 are oxidised to a cystine. Asn-252 carries N-linked (GlcNAc...) asparagine glycosylation. The chain crosses the membrane as a helical span at residues 281 to 301; sequence AFQNYVPSSVTTMLSWVSFWI. At 302 to 307 the chain is on the cytoplasmic side; the sequence is KTESAP. Residues 308–327 traverse the membrane as a helical segment; the sequence is ARTSLGITSVLTMTTLGTFS. Residues 328-343 lie on the Extracellular side of the membrane; the sequence is RKNFPRVSYITALDFY. A helical membrane pass occupies residues 344-364; sequence IAICFVFCFCALLEFAVLNFL. Residues 365-485 lie on the Cytoplasmic side of the membrane; it reads IYNQTKAHAS…HVYRLDNYSR (121 aa). The segment at 413–438 is disordered; that stretch reads EGSDGEERPSCSAQQPPSPGSPEGPR. A helical transmembrane segment spans residues 486 to 506; sequence VVFPVTFFFFNVLYWLVCLNL.

Belongs to the ligand-gated ion channel (TC 1.A.9) family. Gamma-aminobutyric acid receptor (TC 1.A.9.5) subfamily. GABRE sub-subfamily. As to quaternary structure, heteropentamer, formed by a combination of alpha (GABRA1-6), beta (GABRB1-3), gamma (GABRG1-3), delta (GABRD), epsilon (GABRE), rho (GABRR1-3), pi (GABRP) and theta (GABRQ) chains, each subunit exhibiting distinct physiological and pharmacological properties. Expressed in many tissues. Highest levels of expression in adult heart and placenta.

It localises to the cell membrane. Its subcellular location is the postsynaptic cell membrane. It carries out the reaction chloride(in) = chloride(out). Potentiated by pentobarbital, loreclezole, and lanthanum and inhibited by zinc and furosemide. Introduction of the epsilon subunit to the receptor complex resulted in diminished modulatory effects by etomidate, propofol, pregnanolone and flurazepam. Functionally, epsilon subunit of the heteropentameric ligand-gated chloride channel gated by gamma-aminobutyric acid (GABA), a major inhibitory neurotransmitter in the brain. GABA-gated chloride channels, also named GABA(A) receptors (GABAAR), consist of five subunits arranged around a central pore and contain GABA active binding site(s) located at the alpha and beta subunit interfaces. When activated by GABA, GABAARs selectively allow the flow of chloride anions across the cell membrane down their electrochemical gradient. GABAARs containing epsilon subunits also permit spontaneous chloride channel activity while preserving the structural information required for GABA-gated openings. GABARs containing epsilon subunit may regulate cardiac function. The polypeptide is Gamma-aminobutyric acid receptor subunit epsilon (Homo sapiens (Human)).